We begin with the raw amino-acid sequence, 550 residues long: Carboxylesterase 4A (550 aa).

Positions 1 to 20 (MNWILCLSLTLLLVVQTAWG) are cleaved as a signal peptide. A disulfide bridge connects residues Cys-88 and Cys-116. Ser-221 (acyl-ester intermediate) is an active-site residue. A disulfide bond links Cys-273 and Cys-284. Asn-276 carries an N-linked (GlcNAc...) asparagine glycan. The Charge relay system role is filled by Glu-353. Asn-386 is a glycosylation site (N-linked (GlcNAc...) asparagine). His-465 acts as the Charge relay system in catalysis.

It belongs to the type-B carboxylesterase/lipase family.

Its subcellular location is the secreted. Functionally, probable carboxylesterase. The sequence is that of Carboxylesterase 4A (CES4A) from Bos taurus (Bovine).